Here is a 507-residue protein sequence, read N- to C-terminus: Prolyl carboxy peptidase like protein 5 (507 aa).

An N-terminal signal peptide occupies residues 1–16 (MNIFISLAILIATTHC). Residue Asn125 is glycosylated (N-linked (GlcNAc...) asparagine). Ser172 acts as the Charge relay system in catalysis. 2 N-linked (GlcNAc...) asparagine glycosylation sites follow: Asn332 and Asn407. Catalysis depends on charge relay system residues Asp439 and His466.

The protein belongs to the peptidase S28 family.

This Caenorhabditis elegans protein is Prolyl carboxy peptidase like protein 5.